A 910-amino-acid polypeptide reads, in one-letter code: Putative coatomer subunit beta'-3 (910 aa).

9 WD repeats span residues 13–52 (QRSE…MVKS), 55–94 (VTEL…KVKV), 97–136 (AHTD…MCTQ), 140–180 (GHSH…PNFT), 183–224 (GHSK…CVQT), 227–266 (GHAH…LENT), 269–309 (YGLE…ASMD), 351–393 (TCDL…GSAL), and 461–501 (RIDV…SHLD). Acidic residues predominate over residues 865-884 (ENGVEESQEDAVEVDVEADG). The tract at residues 865-910 (ENGVEESQEDAVEVDVEADGSTDGTVLVNGNDTEEQWGTNNEESLA) is disordered. The segment covering 886-910 (TDGTVLVNGNDTEEQWGTNNEESLA) has biased composition (polar residues).

Belongs to the WD repeat COPB2 family. In terms of assembly, oligomeric complex that consists of at least the alpha, beta, beta', gamma, delta, epsilon and zeta subunits.

Its subcellular location is the cytoplasm. It is found in the golgi apparatus membrane. It localises to the cytoplasmic vesicle. The protein resides in the COPI-coated vesicle membrane. Functionally, the coatomer is a cytosolic protein complex that binds to dilysine motifs and reversibly associates with Golgi non-clathrin-coated vesicles, which further mediate biosynthetic protein transport from the ER, via the Golgi up to the trans Golgi network. Coatomer complex is required for budding from Golgi membranes, and is essential for the retrograde Golgi-to-ER transport of dilysine-tagged proteins. This Oryza sativa subsp. japonica (Rice) protein is Putative coatomer subunit beta'-3.